Consider the following 466-residue polypeptide: MSVVPVADVLQGRVAVDSEVTVRGWVRTRRDSKAGISFLAVYDGSCFDPVQAVINNSLPNYNEDVLRLTTGCSVIVTGKVVASPGQGQQFEIQTSKVEVAGWVEDPDTYPMAAKRHSIEYLREVAHLRPRTNLIGAVARVRHTLAQALHRFFNEQGFFWVSTPLITASDTEGAGEMFRVSTLDLENLPRNDQGKVDFDKDFFGKESFLTVSGQLNGETYACALSKIYTFGPTFRAENSNTSRHLAEFWMLEPEVAFANLNDIAGLAEAMLKYVFKAVLEERADDMKFFAERVDKDAVSRLERFIEADFAQVDYTEAVTILENCGRKFENPVYWGVDLSSEHERYLAEEHFKAPVVVKNYPKDIKAFYMRLNEDGKTVAAMDVLAPGIGEIIGGSQREERLDVLDERMLEMGLNKEDYWWYRDLRRYGTVPHSGFGLGFERLIAYVTGVQNVRDVIPFPRTPRNASF.

Belongs to the class-II aminoacyl-tRNA synthetase family. As to quaternary structure, homodimer.

It localises to the cytoplasm. The enzyme catalyses tRNA(Asn) + L-asparagine + ATP = L-asparaginyl-tRNA(Asn) + AMP + diphosphate + H(+). The protein is Asparagine--tRNA ligase of Escherichia coli O157:H7.